The sequence spans 609 residues: MATQAIAPMHAAVVHRHHVLPPRRCVRRRGVFVRASAAAAAAAAETDTLSAAFWDYNLLFRSQRDECLDSIPLRVTEGAIPPDFPAGTYYLAGPGIFSDDHGSTVHPLDGHGYLRSFRFRPGDRTIHYSARFVETAAKREESRDGASWRFTHRGPFSVLQGGKKVGNVKVMKNVANTSVLRWGGRLLCLWEGGQPYEVDPRTLETVGPFDLLGLAAADDNKATNASAARRPWLQEAGLDAAARLLRPVLSGVFDMPGKRLLAHYKIDPRRGRLLMVACNAEDMLLPRSHFTFYEFDAHFDLVQKREFVVPDHLMIHDWAFTDTHYILLGNRIKLDIPGSLLALTGTHPMIAALAVDPRRQSTPVYLLPRSPETEAGGRDWSVPIEAPSQMWSVHVGNAFEEANRRGGLDVRLHMSSCSYQWFHFHRMFGYNWHHKKLDPSFMNAAKGKEWLPRLVQVAIELDRTGECRRCSVRRLSDQHARPADFPAINPSYANQRNRFVYAGAASGSRRFLPYFPFDSVVKVDVSDGSARWWSTDGRKFVGEPVFVPTGGGEDGGYVLLVEYAVSKHRCHLVVLDAKKIGTENALVAKLEVPKNLTFPMGFHGFWGDE.

The N-terminal 34 residues, 1–34 (MATQAIAPMHAAVVHRHHVLPPRRCVRRRGVFVR), are a transit peptide targeting the chloroplast. Fe cation-binding residues include His-263, His-316, His-394, and His-603.

The protein belongs to the carotenoid oxygenase family. The cofactor is Fe(2+). Expressed in vascular bundles of roots, leaves, stems and panicles.

It is found in the plastid. It localises to the chloroplast. It carries out the reaction 9-cis-beta-carotene + O2 = 9-cis-10'-apo-beta-carotenal + beta-ionone. Functionally, involved in strigolactones biosynthesis by cleaving asymmetrically a variety of linear and cyclic carotenoids at the 9-10 double bond. Produces one C(13) beta-ionone and the C(27) 10'-apo-beta-carotenal. Strigolactones are hormones that inhibit tillering and shoot branching through the MAX-dependent pathway, contribute to the regulation of shoot architectural response to phosphate-limiting conditions and function as rhizosphere signal that stimulates hyphal branching of arbuscular mycorrhizal fungi and trigger seed germination of root parasitic weeds. Can rescue the phenotype in the Arabidopsis max3 mutant. The protein is Carotenoid cleavage dioxygenase 7, chloroplastic (CCD7) of Oryza sativa subsp. japonica (Rice).